The chain runs to 265 residues: Serine protease harobin (265 aa).

The signal sequence occupies residues 1–18 (MPLIRVLASLLILQLSYG). The propeptide occupies 19-33 (KSLDNGAKAITSLDR). The Peptidase S1 domain occupies 34-257 (IIGGFECNPS…YKDWIEGIIA (224 aa)). Cystine bridges form between cysteine 40-cysteine 172, cysteine 59-cysteine 75, cysteine 106-cysteine 152, cysteine 107-cysteine 264, cysteine 151-cysteine 218, cysteine 183-cysteine 197, and cysteine 208-cysteine 233. Residue histidine 74 is the Charge relay system of the active site. Residue asparagine 112 is glycosylated (N-linked (GlcNAc...) asparagine). Catalysis depends on aspartate 119, which acts as the Charge relay system. Asparagine 130 is a glycosylation site (N-linked (GlcNAc...) asparagine). Serine 212 functions as the Charge relay system in the catalytic mechanism.

The protein belongs to the peptidase S1 family. Snake venom subfamily. As to quaternary structure, monomer. Post-translationally, harobin contains three additional Cys residues than other snake venom serine proteases, suggesting an additional disulfide bond. In addition, it is more stable than other snake 6-disulfide-bond serine proteases, since it is less sensitive to DTT. In terms of tissue distribution, expressed by the venom gland.

The protein resides in the secreted. With respect to regulation, inhibited by PMSF. Functionally, serine protein with fibrinolytic and fibrinogenolytic activities. Degrades Bbeta-chain (FGB) of fibrinogen first and then the Aalpha-chain (FGA). Gamma-chain (FGG) are also digested on prolonged incubation. In vitro, it cleaves high molecular weight (HMW) kininogen (KNG) releasing bradykinin that promotes vasodilation. In vitro and in vivo, it cleaves angiotensin-2 (AGT). This explains the reduction of blood pressure in hypertensive rats. Also has antithrombotic effects on thrombosis animal models. In Hydrophis hardwickii (Hardwick's spine-bellied seasnake), this protein is Serine protease harobin.